The primary structure comprises 410 residues: Arginine deiminase (410 aa).

Cys-400 serves as the catalytic Amidino-cysteine intermediate.

The protein belongs to the arginine deiminase family.

Its subcellular location is the cytoplasm. It carries out the reaction L-arginine + H2O = L-citrulline + NH4(+). It participates in amino-acid degradation; L-arginine degradation via ADI pathway; carbamoyl phosphate from L-arginine: step 1/2. The polypeptide is Arginine deiminase (Bacillus thuringiensis subsp. konkukian (strain 97-27)).